Consider the following 449-residue polypeptide: Dynein axonemal assembly factor 3 (449 aa).

It belongs to the DNAAF3 family.

The protein resides in the cytoplasm. The protein localises to the dynein axonemal particle. In terms of biological role, required for the assembly of axonemal inner and outer dynein arms. Involved in preassembly of dyneins into complexes before their transport into cilia. This chain is Dynein axonemal assembly factor 3 (dnaaf3), found in Xenopus tropicalis (Western clawed frog).